The following is a 407-amino-acid chain: Na(+)-translocating NADH-quinone reductase subunit F (407 aa).

A helical transmembrane segment spans residues 3 to 23 (IILGVVMFTLIVLALTVMILF). One can recognise a 2Fe-2S ferredoxin-type domain in the interval 32–126 (GDITIDINED…NLKIELPEEI (95 aa)). [2Fe-2S] cluster is bound by residues cysteine 69, cysteine 75, cysteine 78, and cysteine 110. Positions 129–269 (VKKWECEVIS…SGPFGEFFAK (141 aa)) constitute an FAD-binding FR-type domain.

This sequence belongs to the NqrF family. Composed of six subunits; NqrA, NqrB, NqrC, NqrD, NqrE and NqrF. It depends on [2Fe-2S] cluster as a cofactor. The cofactor is FAD.

Its subcellular location is the cell inner membrane. It catalyses the reaction a ubiquinone + n Na(+)(in) + NADH + H(+) = a ubiquinol + n Na(+)(out) + NAD(+). NQR complex catalyzes the reduction of ubiquinone-1 to ubiquinol by two successive reactions, coupled with the transport of Na(+) ions from the cytoplasm to the periplasm. The first step is catalyzed by NqrF, which accepts electrons from NADH and reduces ubiquinone-1 to ubisemiquinone by a one-electron transfer pathway. The chain is Na(+)-translocating NADH-quinone reductase subunit F from Yersinia enterocolitica serotype O:8 / biotype 1B (strain NCTC 13174 / 8081).